A 65-amino-acid chain; its full sequence is MPKMKTNRAAAKRFKKTANGGLKSANAYTSHRFHGKTKKQRRQLRGTDMMDSTNVKRYKKLLSNI.

Residues 1–51 (MPKMKTNRAAAKRFKKTANGGLKSANAYTSHRFHGKTKKQRRQLRGTDMMD) are disordered. A compositionally biased stretch (basic residues) spans 31-44 (HRFHGKTKKQRRQL).

The protein belongs to the bacterial ribosomal protein bL35 family.

In Pediococcus pentosaceus (strain ATCC 25745 / CCUG 21536 / LMG 10740 / 183-1w), this protein is Large ribosomal subunit protein bL35.